The primary structure comprises 1305 residues: Contactin-associated protein-like 5 (1305 aa).

The N-terminal stretch at Met-1 to Thr-22 is a signal peptide. The F5/8 type C domain occupies Ala-23–Cys-174. The Extracellular portion of the chain corresponds to Ala-23–Ser-1236. Laminin G-like domains lie at Ile-180–Cys-360 and Pro-367–Cys-544. Intrachain disulfides connect Cys-329-Cys-360, Cys-512-Cys-544, Cys-550-Cys-561, Cys-555-Cys-570, and Cys-572-Cys-582. In terms of domain architecture, EGF-like 1 spans Ile-546–His-583. In terms of domain architecture, Fibrinogen C-terminal spans Asn-584–Trp-790. Residues Asn-791 to Cys-956 form the Laminin G-like 3 domain. Disulfide bonds link Cys-929–Cys-956, Cys-960–Cys-973, Cys-967–Cys-982, Cys-984–Cys-994, and Cys-1163–Cys-1198. One can recognise an EGF-like 2 domain in the interval Pro-957 to Lys-995. Positions Pro-1017–Cys-1198 constitute a Laminin G-like 4 domain. The helical transmembrane segment at Ala-1237–Met-1257 threads the bilayer. Topologically, residues Ser-1258–Ile-1305 are cytoplasmic.

It belongs to the neurexin family. In terms of tissue distribution, expressed in brain.

Its subcellular location is the membrane. May play a role in the correct development and proper functioning of the peripheral and central nervous system and be involved in cell adhesion and intercellular communication. This is Contactin-associated protein-like 5 (CNTNAP5) from Gallus gallus (Chicken).